The sequence spans 202 residues: LexA repressor (202 aa).

The H-T-H motif DNA-binding region spans 28-48 (RAEIAQRLGFRSPNAAEEHLK). Residues Ser-119 and Lys-156 each act as for autocatalytic cleavage activity in the active site.

The protein belongs to the peptidase S24 family. Homodimer.

It carries out the reaction Hydrolysis of Ala-|-Gly bond in repressor LexA.. In terms of biological role, represses a number of genes involved in the response to DNA damage (SOS response), including recA and lexA. Binds to the 16 bp palindromic sequence 5'-CTGTATATATATACAG-3'. In the presence of single-stranded DNA, RecA interacts with LexA causing an autocatalytic cleavage which disrupts the DNA-binding part of LexA, leading to derepression of the SOS regulon and eventually DNA repair. The sequence is that of LexA repressor from Yersinia pseudotuberculosis serotype O:1b (strain IP 31758).